A 215-amino-acid chain; its full sequence is Thymidylate kinase (215 aa).

ATP is bound at residue 11–18 (GIDGAGKS).

The protein belongs to the thymidylate kinase family.

The enzyme catalyses dTMP + ATP = dTDP + ADP. Its function is as follows. Phosphorylation of dTMP to form dTDP in both de novo and salvage pathways of dTTP synthesis. The sequence is that of Thymidylate kinase from Nitrosomonas europaea (strain ATCC 19718 / CIP 103999 / KCTC 2705 / NBRC 14298).